The following is a 144-amino-acid chain: Small ribosomal subunit protein eS19 (144 aa).

The protein belongs to the eukaryotic ribosomal protein eS19 family.

The protein is Small ribosomal subunit protein eS19 (RPS19) of Argopecten irradians (Bay scallop).